Reading from the N-terminus, the 236-residue chain is Small ribosomal subunit protein eS6 (236 aa).

It belongs to the eukaryotic ribosomal protein eS6 family. As to quaternary structure, component of the small ribosomal subunit. Mature ribosomes consist of a small (40S) and a large (60S) subunit. The 40S subunit contains about 32 different proteins and 1 molecule of RNA (18S). The 60S subunit contains 45 different proteins and 3 molecules of RNA (25S, 5.8S and 5S).

The protein resides in the cytoplasm. Functionally, component of the ribosome, a large ribonucleoprotein complex responsible for the synthesis of proteins in the cell. The small ribosomal subunit (SSU) binds messenger RNAs (mRNAs) and translates the encoded message by selecting cognate aminoacyl-transfer RNA (tRNA) molecules. The large subunit (LSU) contains the ribosomal catalytic site termed the peptidyl transferase center (PTC), which catalyzes the formation of peptide bonds, thereby polymerizing the amino acids delivered by tRNAs into a polypeptide chain. The nascent polypeptides leave the ribosome through a tunnel in the LSU and interact with protein factors that function in enzymatic processing, targeting, and the membrane insertion of nascent chains at the exit of the ribosomal tunnel. RPS6A is involved in nucleolar processing of pre-18S ribosomal RNA and ribosome assembly. The sequence is that of Small ribosomal subunit protein eS6 (RPS6A) from Candida albicans (strain SC5314 / ATCC MYA-2876) (Yeast).